A 113-amino-acid chain; its full sequence is Parvalbumin beta (113 aa).

Residue A1 is modified to N-acetylalanine. C18 is a glycosylation site (S-linked (Glc) cysteine). EF-hand domains lie at 38 to 73 (FSAD…FAAD) and 77 to 112 (LTDA…WGAK). D51, D53, E55, F57, E59, E62, D90, D92, D94, K96, and E101 together coordinate Ca(2+).

The protein belongs to the parvalbumin family. In terms of tissue distribution, muscle (at protein level).

Functionally, in muscle, parvalbumin is thought to be involved in relaxation after contraction. It binds two calcium ions. The polypeptide is Parvalbumin beta (Gadus morhua subsp. callarias (Baltic cod)).